The chain runs to 101 residues: DNA-directed RNA polymerase subunit beta (101 aa).

Residues Lys-74–His-101 form a disordered region. A compositionally biased stretch (basic and acidic residues) spans Ser-86 to His-101.

This sequence belongs to the RNA polymerase beta chain family. As to quaternary structure, the RNAP catalytic core consists of 2 alpha, 1 beta, 1 beta' and 1 omega subunit. When a sigma factor is associated with the core the holoenzyme is formed, which can initiate transcription.

It catalyses the reaction RNA(n) + a ribonucleoside 5'-triphosphate = RNA(n+1) + diphosphate. DNA-dependent RNA polymerase catalyzes the transcription of DNA into RNA using the four ribonucleoside triphosphates as substrates. This is DNA-directed RNA polymerase subunit beta (rpoB) from Mycolicibacterium peregrinum (Mycobacterium peregrinum).